The primary structure comprises 425 residues: D-arabinitol transporter (425 aa).

The Cytoplasmic segment spans residues 1 to 7 (MSINNKQ). Residues 8-28 (WLGLPLNLLWGYIAIAVFMTG) form a helical membrane-spanning segment. Residues 29–51 (DGFELAFLSHYIKALGFSPAEAS) lie on the Extracellular side of the membrane. A helical membrane pass occupies residues 52–72 (FAFTLYGLAAALSAWISGVVA). Over 73–80 (EIITPLKT) the chain is Cytoplasmic. The helical transmembrane segment at 81 to 101 (MMIGFVLWCVFHVLFLVFGLG) threads the bilayer. The Extracellular segment spans residues 102–107 (HANYAL). The chain crosses the membrane as a helical span at residues 108–128 (ILLFYGIRGFAYPLFLYSFIV). At 129 to 141 (AIVHNVKSDNASS) the chain is on the cytoplasmic side. The helical transmembrane segment at 142–162 (AIGWFWAVYSIGIGVFGSYIP) threads the bilayer. Over 163-172 (SFTIPHIGEM) the chain is Extracellular. Residues 173–193 (GTLWLALAFCLTGGVIALVSL) traverse the membrane as a helical segment. The Cytoplasmic portion of the chain corresponds to 194 to 237 (RHIQTPQHMQNLTTREKFSELGRAATLLYTNRNILLSSMVRIIN). The chain crosses the membrane as a helical span at residues 238–258 (TLSLFGFAVIMPMMFVDELGF). Residues 259-263 (STSEW) are Extracellular-facing. The helical transmembrane segment at 264-284 (LQVWAVFFFTTIFSNVLWGIL) threads the bilayer. At 285–295 (GEKLGWMKVVR) the chain is on the cytoplasmic side. The chain crosses the membrane as a helical span at residues 296–316 (WFGCIGMALSSLAFYYIPQHF). Topologically, residues 317–323 (GHSFAMA) are extracellular. The chain crosses the membrane as a helical span at residues 324-344 (LIPAIALGIFVAAFVPLAAVF). The Cytoplasmic segment spans residues 345 to 360 (PALEPKHKGAAISVYN). A helical transmembrane segment spans residues 361 to 381 (LSAGMSNFLAPAIAVVLLPFF). The Extracellular portion of the chain corresponds to 382-383 (ST). A helical transmembrane segment spans residues 384 to 404 (IGVVIAYTALYVVAFFLCAFI). Topologically, residues 405–425 (RVEQPGFSHKEATAREQVEFS) are cytoplasmic.

The protein belongs to the major facilitator superfamily. Sugar transporter (TC 2.A.1.1) family. CsbX subfamily.

The protein localises to the cell membrane. The protein is D-arabinitol transporter (dalT) of Klebsiella pneumoniae.